A 362-amino-acid chain; its full sequence is 2-oxoglutarate-dependent dioxygenase lolO1 (362 aa).

The Fe2OG dioxygenase domain occupies 199 to 312 (TWNYFLGQPV…RYSLVFFGHL (114 aa)). The Fe cation site is built by H222, D224, and H280. R303 contacts 2-oxoglutarate.

The protein belongs to the iron/ascorbate-dependent oxidoreductase family. Requires Fe(2+) as cofactor.

It participates in alkaloid biosynthesis. 2-oxoglutarate-dependent dioxygenase; part of the gene cluster that mediates the biosynthesis of loline alkaloids, potent insecticidal agents composed of a pyrrolizidine ring system and an uncommon ether bridge linking carbons 2 and 7. Lolines are structurally differentiated by the various modifications of the L-amino group and include norloline, loline, N-methylloline, N-acetylloline, N-acetylnorloline, and N-formylloline. The first committed step is the condensation of O-acetyl-L-homoserine (derived from L-aspartic acid) and L-proline, probably catalyzed by the gamma-type pyridoxal 5'-phosphate(PLP)-dependent enzyme lolC, to give the diamino diacid, NACPP. Ensuing cyclization, decarboxylation, and acetylation steps yield 1-exo-acetamidopyrrolizidine (AcAP). LolO is required for installation of the ether bridge upon the pathway intermediate, 1-exo-acetamidopyrrolizidine (AcAP). In sequential 2-oxoglutarate- and O(2)-consuming steps, lolO removes hydrogens from C2 and C7 of AcAP to form both carbon-oxygen bonds in N-acetylnorloline (NANL), the precursor to all other lolines. The enzymes lolD, lolE, lolF and lolT have also been proposed to be involved in the ether-bridge installation. Further processing of the exocyclic moiety of NANL by fungal N-acetamidase (LolN), methyltransferase (LolM), and cytochrome P450 (LolP) enzymes, with occasional involvement of a plant acetyltransferase, generates the other known lolines. LolN transforms NANL to norlonine which is monomethylated and dimethylated to respectively lonine and N-methyllonine (NML) by lolM. LolP catalyzes hydroxylation of the methyl group in N-methylloline (NML) and further oxygenation to N-formylloline (NFL). A plant acetyltransferase is responsible for the acetylation of loline to form N-acetylloline (NAL). LolA might interact with aspartate kinase to prevent feedback inhibition of its activity by these end products and thereby promote production of l-homoserine from l-aspartate. The chain is 2-oxoglutarate-dependent dioxygenase lolO1 from Epichloe uncinata (Endophyte fungus).